The following is a 1416-amino-acid chain: DNA-directed RNA polymerase subunit beta (1416 aa).

It belongs to the RNA polymerase beta chain family. In terms of assembly, in plastids the minimal PEP RNA polymerase catalytic core is composed of four subunits: alpha, beta, beta', and beta''. When a (nuclear-encoded) sigma factor is associated with the core the holoenzyme is formed, which can initiate transcription.

It is found in the plastid. Its subcellular location is the chloroplast. It catalyses the reaction RNA(n) + a ribonucleoside 5'-triphosphate = RNA(n+1) + diphosphate. Its function is as follows. DNA-dependent RNA polymerase catalyzes the transcription of DNA into RNA using the four ribonucleoside triphosphates as substrates. This Oltmannsiellopsis viridis (Marine flagellate) protein is DNA-directed RNA polymerase subunit beta.